The following is an 82-amino-acid chain: MATKKEFDIFAHELVPEHRILSEEETKELLRRYRIQISQLPQIKASDPAVVALGAKPGDVLEIKRKSRTAGYYYYYRLVVED.

This sequence belongs to the archaeal Rpo5/eukaryotic RPB5 RNA polymerase subunit family. As to quaternary structure, part of the RNA polymerase complex.

The protein localises to the cytoplasm. It catalyses the reaction RNA(n) + a ribonucleoside 5'-triphosphate = RNA(n+1) + diphosphate. In terms of biological role, DNA-dependent RNA polymerase (RNAP) catalyzes the transcription of DNA into RNA using the four ribonucleoside triphosphates as substrates. In Thermococcus celer, this protein is DNA-directed RNA polymerase subunit Rpo5.